Consider the following 626-residue polypeptide: Fructose-1,6-bisphosphatase class 3 (626 aa).

This sequence belongs to the FBPase class 3 family. Requires Mn(2+) as cofactor.

The catalysed reaction is beta-D-fructose 1,6-bisphosphate + H2O = beta-D-fructose 6-phosphate + phosphate. It functions in the pathway carbohydrate biosynthesis; gluconeogenesis. This Enterococcus faecalis (strain ATCC 700802 / V583) protein is Fructose-1,6-bisphosphatase class 3.